Consider the following 406-residue polypeptide: Elongation factor Tu (406 aa).

In terms of domain architecture, tr-type G spans 10–215 (KPHVNVGTIG…AIDEYIPTPV (206 aa)). Residues 19 to 26 (GHVDHGKT) are G1. 19–26 (GHVDHGKT) contributes to the GTP binding site. Residue threonine 26 coordinates Mg(2+). The G2 stretch occupies residues 61–65 (GITIN). Residues 82–85 (DCPG) form a G3 region. Residues 82–86 (DCPGH) and 137–140 (NKVD) contribute to the GTP site. The G4 stretch occupies residues 137–140 (NKVD). The G5 stretch occupies residues 175–177 (SAL).

The protein belongs to the TRAFAC class translation factor GTPase superfamily. Classic translation factor GTPase family. EF-Tu/EF-1A subfamily. As to quaternary structure, monomer.

The protein localises to the cytoplasm. The enzyme catalyses GTP + H2O = GDP + phosphate + H(+). Functionally, GTP hydrolase that promotes the GTP-dependent binding of aminoacyl-tRNA to the A-site of ribosomes during protein biosynthesis. The polypeptide is Elongation factor Tu (Thermus thermophilus (strain ATCC BAA-163 / DSM 7039 / HB27)).